Reading from the N-terminus, the 85-residue chain is DNA-directed RNA polymerase subunit beta'' (85 aa).

Belongs to the RNA polymerase beta' chain family. RpoC2 subfamily. As to quaternary structure, in plastids the minimal PEP RNA polymerase catalytic core is composed of four subunits: alpha, beta, beta', and beta''. When a (nuclear-encoded) sigma factor is associated with the core the holoenzyme is formed, which can initiate transcription.

Its subcellular location is the plastid. It localises to the chloroplast. The catalysed reaction is RNA(n) + a ribonucleoside 5'-triphosphate = RNA(n+1) + diphosphate. Its function is as follows. DNA-dependent RNA polymerase catalyzes the transcription of DNA into RNA using the four ribonucleoside triphosphates as substrates. This chain is DNA-directed RNA polymerase subunit beta'' (rpoC2), found in Galdieria sulphuraria (Red alga).